We begin with the raw amino-acid sequence, 546 residues long: 2-isopropylmalate synthase (546 aa).

The region spanning 8–271 (ILIFDTTLRD…NSFFGRSSDS (264 aa)) is the Pyruvate carboxyltransferase domain. D17, H208, H210, and N244 together coordinate Mn(2+). The regulatory domain stretch occupies residues 408-546 (QLSHVQVSCG…KNKVLSNPKK (139 aa)).

The protein belongs to the alpha-IPM synthase/homocitrate synthase family. LeuA type 1 subfamily. As to quaternary structure, homodimer. Requires Mn(2+) as cofactor.

It localises to the cytoplasm. It carries out the reaction 3-methyl-2-oxobutanoate + acetyl-CoA + H2O = (2S)-2-isopropylmalate + CoA + H(+). The protein operates within amino-acid biosynthesis; L-leucine biosynthesis; L-leucine from 3-methyl-2-oxobutanoate: step 1/4. Catalyzes the condensation of the acetyl group of acetyl-CoA with 3-methyl-2-oxobutanoate (2-ketoisovalerate) to form 3-carboxy-3-hydroxy-4-methylpentanoate (2-isopropylmalate). The sequence is that of 2-isopropylmalate synthase from Prochlorococcus marinus subsp. pastoris (strain CCMP1986 / NIES-2087 / MED4).